A 266-amino-acid chain; its full sequence is Undecaprenyl-diphosphatase (266 aa).

8 consecutive transmembrane segments (helical) span residues 1–21, 39–59, 87–107, 114–134, 144–164, 184–204, 218–238, and 246–266; these read MDIFQVIVLALIQGLTEFLPI, QGLTFDVAVNTGSLLAVVIYF, WWIILATIPAVIFGFTAKDFI, IEVIATTTIVFGLLLWWADKL, VGWKKALLIGFAQAMALIPGT, AARFSFLMSVPVSLGAAILVV, ALVLGTALSFVAAYLCIHYFL, and MTPFVIYRLALGAILCVVIFA.

It belongs to the UppP family.

The protein localises to the cell inner membrane. The enzyme catalyses di-trans,octa-cis-undecaprenyl diphosphate + H2O = di-trans,octa-cis-undecaprenyl phosphate + phosphate + H(+). In terms of biological role, catalyzes the dephosphorylation of undecaprenyl diphosphate (UPP). Confers resistance to bacitracin. This is Undecaprenyl-diphosphatase from Shewanella loihica (strain ATCC BAA-1088 / PV-4).